The primary structure comprises 365 residues: Cobalt-precorrin-5B C(1)-methyltransferase (365 aa).

It belongs to the CbiD family.

The enzyme catalyses Co-precorrin-5B + S-adenosyl-L-methionine = Co-precorrin-6A + S-adenosyl-L-homocysteine. The protein operates within cofactor biosynthesis; adenosylcobalamin biosynthesis; cob(II)yrinate a,c-diamide from sirohydrochlorin (anaerobic route): step 6/10. Its function is as follows. Catalyzes the methylation of C-1 in cobalt-precorrin-5B to form cobalt-precorrin-6A. This Paraburkholderia phytofirmans (strain DSM 17436 / LMG 22146 / PsJN) (Burkholderia phytofirmans) protein is Cobalt-precorrin-5B C(1)-methyltransferase.